Consider the following 292-residue polypeptide: Syntaxin-19 (292 aa).

A t-SNARE coiled-coil homology domain is found at 207-269; that stretch reads LSEIEQRHKE…NNTKEKFGLA (63 aa).

This sequence belongs to the syntaxin family. In terms of assembly, interacts with EGFR. As to expression, expressed in stomach, lung and skin (at protein level). In stomach, strongly expressed in the mucosa of the fundus, in epithelial cells of gastric pits, and in gastric glands (at protein level). In skin, expressed in the epidermis, dermis, and epithelial layer of the hair bulb (at protein level).

It is found in the cell membrane. Its subcellular location is the cytoplasm. Plays a role in endosomal trafficking of the epidermal growth factor receptor (EGFR). The protein is Syntaxin-19 of Mus musculus (Mouse).